The following is a 462-amino-acid chain: Ribosomal protein uS12 methylthiotransferase RimO (462 aa).

In terms of domain architecture, MTTase N-terminal spans 22 to 133; that stretch reads ASVAFLHLGC…IIEVLQRVRQ (112 aa). [4Fe-4S] cluster contacts are provided by cysteine 31, cysteine 67, cysteine 96, cysteine 171, cysteine 175, and cysteine 178. Residues 157–386 form the Radical SAM core domain; it reads TTGRFVSYLK…VAIQQPISAA (230 aa). In terms of domain architecture, TRAM spans 389–460; it reads QALIGQTVDV…LYDLTGEINH (72 aa).

Belongs to the methylthiotransferase family. RimO subfamily. [4Fe-4S] cluster serves as cofactor.

The protein localises to the cytoplasm. The enzyme catalyses L-aspartate(89)-[ribosomal protein uS12]-hydrogen + (sulfur carrier)-SH + AH2 + 2 S-adenosyl-L-methionine = 3-methylsulfanyl-L-aspartate(89)-[ribosomal protein uS12]-hydrogen + (sulfur carrier)-H + 5'-deoxyadenosine + L-methionine + A + S-adenosyl-L-homocysteine + 2 H(+). Catalyzes the methylthiolation of an aspartic acid residue of ribosomal protein uS12. The protein is Ribosomal protein uS12 methylthiotransferase RimO of Prochlorococcus marinus (strain MIT 9211).